A 550-amino-acid polypeptide reads, in one-letter code: MRPQPSPAVPSRCREAPVPRVRAQPVGIPEAQGPVPLHSQQMRLLWGPGRPFLALLLLVSIKQVTGSLLKETTQKWANYKEKCLEDLHNRLSGIFCNGTFDRYVCWPHSYPGNVSVPCPSYLPWWNAESPGRAYRHCLAQGTWQTRENTTDIWQDESECSENHSFRQNVDHYALLYTLQLMYTVGYSVSLISLFLALTLFLFLRKLHCTRNYIHMNLFASFILKVLAVLVKDMVSHNSYSKRPDDESGWMSYLSETSVSCRSVQVLLHYFVGTNHLWLLVEGLYLHTLLEPTVFPERRLWPKYLVVGWAFPMLFVIPWGFARAHLENTRCWATNGNLKIWWIIRGPMLLCVTVNFFIFLKILKLLISKLKAHQMCFRDYKYRLAKSTLLLIPLLGVHEVLFTFFPDDQVQGFSKRIRLFIQLTLSSVHGFLVALQYGFANGEVKAELRKSWGRFLLARHWGCRTCVLGKNFRFLGKCSKKLSEGDGSETLQKLRFSTCSSHLASETLGDVGVQPHRGRGAWPRGSSLSESSEGDFTLANTMEEILEESEI.

The Extracellular segment spans residues 1–173 (MRPQPSPAVP…SFRQNVDHYA (173 aa)). Intrachain disulfides connect Cys83–Cys105, Cys96–Cys137, and Cys118–Cys159. Asn97, Asn113, Asn148, and Asn162 each carry an N-linked (GlcNAc...) asparagine glycan. The chain crosses the membrane as a helical span at residues 174 to 198 (LLYTLQLMYTVGYSVSLISLFLALT). Residues 199–210 (LFLFLRKLHCTR) are Cytoplasmic-facing. A helical transmembrane segment spans residues 211 to 235 (NYIHMNLFASFILKVLAVLVKDMVS). The Extracellular portion of the chain corresponds to 236–261 (HNSYSKRPDDESGWMSYLSETSVSCR). A helical membrane pass occupies residues 262-285 (SVQVLLHYFVGTNHLWLLVEGLYL). At 286–299 (HTLLEPTVFPERRL) the chain is on the cytoplasmic side. Residues 300–321 (WPKYLVVGWAFPMLFVIPWGFA) form a helical membrane-spanning segment. The Extracellular portion of the chain corresponds to 322–339 (RAHLENTRCWATNGNLKI). A helical membrane pass occupies residues 340 to 362 (WWIIRGPMLLCVTVNFFIFLKIL). Topologically, residues 363–386 (KLLISKLKAHQMCFRDYKYRLAKS) are cytoplasmic. A helical membrane pass occupies residues 387–405 (TLLLIPLLGVHEVLFTFFP). Residues 406-417 (DDQVQGFSKRIR) are Extracellular-facing. A helical membrane pass occupies residues 418-438 (LFIQLTLSSVHGFLVALQYGF). Over 439–550 (ANGEVKAELR…MEEILEESEI (112 aa)) the chain is Cytoplasmic.

The protein belongs to the G-protein coupled receptor 2 family.

Its subcellular location is the cell membrane. This is a receptor for glucagon-like peptide 2. The activity of this receptor is mediated by G proteins which activate adenylyl cyclase. The polypeptide is Glucagon-like peptide 2 receptor (Glp2r) (Rattus norvegicus (Rat)).